A 177-amino-acid chain; its full sequence is Apoptosis regulatory protein Siva (177 aa).

Tyr-34 bears the Phosphotyrosine; by ABL2 mark. An interaction with BCL2L1 isoform Bcl-x(L) and inhibition of BCL2L1 anti-apoptotic activity region spans residues 36–55; the sequence is REVFERTKQLLFQGAQAYRD.

As to quaternary structure, binds through its N-terminal region to the C-terminus of CD27 and to PXMP2/PMP22. Binds to the C-terminus of TNFRSF18/GITR. Binds to BCL2L1/BCLX isoform Bcl-x(L) but not to BAX. It depends on Zn(2+) as a cofactor. In terms of tissue distribution, in post-ischemic kidney, found in cells lining the S3 segment of proximal tubules at 12 hours and 1 day post-ischemia. At five and seven days post-ischemia, found in epithelial cells of papillary proliferations in regenerating tubules.

The protein resides in the cytoplasm. The protein localises to the nucleus. Functionally, induces CD27-mediated apoptosis. Inhibits BCL2L1 isoform Bcl-x(L) anti-apoptotic activity. Inhibits activation of NF-kappa-B and promotes T-cell receptor-mediated apoptosis. This is Apoptosis regulatory protein Siva (Siva1) from Rattus norvegicus (Rat).